The sequence spans 93 residues: Large ribosomal subunit protein uL23 (93 aa).

The protein belongs to the universal ribosomal protein uL23 family. As to quaternary structure, part of the 50S ribosomal subunit. Contacts protein L29, and trigger factor when it is bound to the ribosome.

One of the early assembly proteins it binds 23S rRNA. One of the proteins that surrounds the polypeptide exit tunnel on the outside of the ribosome. Forms the main docking site for trigger factor binding to the ribosome. The protein is Large ribosomal subunit protein uL23 of Campylobacter lari (strain RM2100 / D67 / ATCC BAA-1060).